Here is a 4912-residue protein sequence, read N- to C-terminus: Probable E3 ubiquitin-protein ligase HERC2 (4912 aa).

The disordered stretch occupies residues Met1 to His67. A compositionally biased stretch (gly residues) spans Gly8 to Ala17. The segment covering Gly18 to Gly31 has biased composition (low complexity). Composition is skewed to gly residues over residues Val32–Ser41 and Ser49–Ser59. RCC1 repeat units follow at residues Asn634–Cys685, Gly686–Ser739, Gly741–Ser789, Gly791–Ser843, and Ser844–Gln897. Disordered regions lie at residues Arg1102 to Pro1129, Gln1428 to Gly1475, and Gln1659 to Thr1681. Positions Ser1446–Thr1458 are enriched in polar residues. Thr1776 carries the phosphothreonine modification. The MIB/HERC2 domain occupies Ser1917–Ala1990. 2 disordered regions span residues Ala1994–Ser2018 and Gly2381–Gly2412. Polar residues predominate over residues Glu2396–Gly2412. Residues Ala2511–His2557 enclose the UBA domain. Positions Leu2572–Lys2620 are disordered. The span at Ser2591–Thr2604 shows a compositional bias: low complexity. The CPH domain occupies Arg2624 to Glu2699. Residues Thr2780–Val2958 form the DOC domain. 7 RCC1 repeats span residues Pro2985–Gln3036, Asp3037–Leu3090, Asp3091–Ser3142, Gly3144–Leu3194, Asp3197–Arg3248, Gly3250–Asp3300, and Gly3302–Leu3352. 2 disordered regions span residues Leu3352–Leu3374 and Leu3953–Asp4000. Residues Leu3974 to Val3988 show a composition bias toward low complexity. RCC1 repeat units lie at residues Ser4049–Pro4099, Gly4101–Thr4153, Gly4155–Ala4205, Gly4207–Asp4259, Asp4261–Lys4311, Gly4313–Asp4363, and Gly4365–Thr4415. The HECT domain occupies Ala4547–Asp4882. The active-site Glycyl thioester intermediate is the Cys4850. The segment at Glu4891–Gly4912 is disordered.

It localises to the cytoplasm. The protein resides in the cytoskeleton. It is found in the microtubule organizing center. The protein localises to the centrosome. Its subcellular location is the centriole. It catalyses the reaction S-ubiquitinyl-[E2 ubiquitin-conjugating enzyme]-L-cysteine + [acceptor protein]-L-lysine = [E2 ubiquitin-conjugating enzyme]-L-cysteine + N(6)-ubiquitinyl-[acceptor protein]-L-lysine.. It functions in the pathway protein modification; protein ubiquitination. Functionally, probable E3 ubiquitin-protein ligase which accepts ubiquitin from an E2 ubiquitin-conjugating enzyme in the form of a thioester and then directly transfers the ubiquitin to targeted substrates. The polypeptide is Probable E3 ubiquitin-protein ligase HERC2 (HERC2) (Drosophila melanogaster (Fruit fly)).